Consider the following 413-residue polypeptide: Hemocyanin type 2 unit e (413 aa).

An N-linked (GlcNAc...) (high mannose) asparagine glycan is attached at Asn17. Cu cation is bound at residue His49. A disulfide bond links Cys55 and Cys66. Residues 67–69 (CVH) constitute a cross-link (2'-(S-cysteinyl)-histidine (Cys-His)). Cu cation contacts are provided by His69 and His78. The N-linked (GlcNAc...) (high mannose) asparagine glycan is linked to Asn127. 2 disulfides stabilise this stretch: Cys179-Cys246 and Cys336-Cys342. 3 residues coordinate Cu cation: His189, His193, and His220.

This sequence belongs to the tyrosinase family. Hemocyanin subfamily. Decamers of large identical subunits, each containing 8 globular oxygen-binding functional units. It depends on Cu(2+) as a cofactor. Hemolymph.

It localises to the secreted. It is found in the extracellular space. Functionally, hemocyanins are copper-containing oxygen carriers occurring freely dissolved in the hemolymph of many mollusks and arthropods. This is Hemocyanin type 2 unit e from Rapana venosa (Veined rapa whelk).